Here is a 2995-residue protein sequence, read N- to C-terminus: Striated muscle preferentially expressed protein kinase (2995 aa).

The Ig-like 1 domain occupies Pro-27–Ala-109. A disulfide bridge links Cys-50 with Cys-93. Disordered regions lie at residues Ile-250–Gln-272 and Leu-384–Pro-467. The segment covering Leu-384–Gln-404 has biased composition (polar residues). A compositionally biased stretch (low complexity) spans Pro-454–Asn-464. Ig-like domains follow at residues Pro-613–Ile-701 and Pro-714–Tyr-802. Cys-639 and Cys-691 form a disulfide bridge. Residues Ser-815–Val-834 are disordered. Positions Pro-840–Ala-930 constitute an Ig-like 4 domain. A disulfide bond links Cys-861 and Cys-912. Residues Pro-937 to Gly-1035 form the Fibronectin type-III 1 domain. In terms of domain architecture, Ig-like 5 spans Pro-1135 to Thr-1224. The 251-residue stretch at Tyr-1255 to Phe-1505 folds into the Protein kinase 1 domain. ATP-binding positions include Ile-1261–Val-1269 and Lys-1283. Asp-1372 acts as the Proton acceptor in catalysis. Disordered stretches follow at residues Val-1559–Glu-1582, Arg-1776–Asp-1839, Leu-2017–Lys-2058, Val-2163–Gln-2189, Ser-2211–Ile-2254, and Ser-2268–Phe-2322. Positions Ser-1786 to Asp-1795 are enriched in polar residues. Residues Ser-2274 to Ser-2284 show a composition bias toward low complexity. Over residues Thr-2289–Gly-2299 the composition is skewed to basic and acidic residues. The 91-residue stretch at Pro-2323–Thr-2413 folds into the Ig-like 6 domain. Cys-2345 and Cys-2397 are disulfide-bonded. One can recognise a Fibronectin type-III 2 domain in the interval Cys-2420–Thr-2513. Disordered stretches follow at residues Pro-2574–Pro-2609 and Gly-2648–Gly-2676. Polar residues-rich tracts occupy residues Ser-2587–Ser-2605 and Ser-2652–Arg-2674. The Protein kinase 2 domain occupies Tyr-2682–Leu-2934. Residues Lys-2688 to Ile-2696 and Lys-2711 contribute to the ATP site. Asp-2801 (proton acceptor) is an active-site residue.

Belongs to the protein kinase superfamily. CAMK Ser/Thr protein kinase family. May be autophosphorylated. As to expression, preferentially expressed in striated muscle.

The protein localises to the nucleus. It catalyses the reaction L-seryl-[protein] + ATP = O-phospho-L-seryl-[protein] + ADP + H(+). The catalysed reaction is L-threonyl-[protein] + ATP = O-phospho-L-threonyl-[protein] + ADP + H(+). The chain is Striated muscle preferentially expressed protein kinase (speg) from Danio rerio (Zebrafish).